We begin with the raw amino-acid sequence, 863 residues long: Bifunctional uridylyltransferase/uridylyl-removing enzyme (863 aa).

Residues 1–328 (MLFPLSLSSP…SSNQATVIEQ (328 aa)) are uridylyltransferase. The tract at residues 329–687 (LDDDFQLINQ…ISNRFSLGGT (359 aa)) is uridylyl-removing. Residues 446-568 (VDEHTLRVML…VQNQVRLDYL (123 aa)) form the HD domain. 2 ACT domains span residues 688 to 772 (EVFI…PNRQ) and 794 to 863 (EMEL…RNIG).

The protein belongs to the GlnD family. Mg(2+) is required as a cofactor.

It carries out the reaction [protein-PII]-L-tyrosine + UTP = [protein-PII]-uridylyl-L-tyrosine + diphosphate. It catalyses the reaction [protein-PII]-uridylyl-L-tyrosine + H2O = [protein-PII]-L-tyrosine + UMP + H(+). Its activity is regulated as follows. Uridylyltransferase (UTase) activity is inhibited by glutamine, while glutamine activates uridylyl-removing (UR) activity. Functionally, modifies, by uridylylation and deuridylylation, the PII regulatory proteins (GlnB and homologs), in response to the nitrogen status of the cell that GlnD senses through the glutamine level. Under low glutamine levels, catalyzes the conversion of the PII proteins and UTP to PII-UMP and PPi, while under higher glutamine levels, GlnD hydrolyzes PII-UMP to PII and UMP (deuridylylation). Thus, controls uridylylation state and activity of the PII proteins, and plays an important role in the regulation of nitrogen assimilation and metabolism. This chain is Bifunctional uridylyltransferase/uridylyl-removing enzyme, found in Haemophilus influenzae (strain PittEE).